Reading from the N-terminus, the 1111-residue chain is Kinesin-like protein KIP1 (1111 aa).

A compositionally biased stretch (polar residues) spans methionine 1–threonine 11. The interval methionine 1 to methionine 34 is disordered. The region spanning asparagine 52–isoleucine 410 is the Kinesin motor domain. Position 141 to 148 (glycine 141 to threonine 148) interacts with ATP. Coiled coils occupy residues threonine 424 to asparagine 510, lysine 648 to serine 670, lysine 710 to isoleucine 780, and histidine 808 to leucine 828. Residues alanine 1007–serine 1016 are compositionally biased toward basic and acidic residues. Residues alanine 1007–glutamine 1111 are disordered. 2 stretches are compositionally biased toward polar residues: residues asparagine 1017–proline 1038 and serine 1057–asparagine 1082.

This sequence belongs to the TRAFAC class myosin-kinesin ATPase superfamily. Kinesin family. BimC subfamily. As to quaternary structure, might be dimeric.

Its subcellular location is the cytoplasm. The protein localises to the cytoskeleton. It localises to the spindle. Its function is as follows. Required for assembly of the mitotic spindle. Interacts with spindle microtubules to produce an outwardly directed force acting upon the poles. Following spindle assembly, CIN8 and KIP1 apparently act to oppose a force that draws separated poles back together. This force seems to be mediate by KAR3. The polypeptide is Kinesin-like protein KIP1 (KIP1) (Saccharomyces cerevisiae (strain ATCC 204508 / S288c) (Baker's yeast)).